We begin with the raw amino-acid sequence, 397 residues long: Putative nickel insertion protein (397 aa).

The protein belongs to the LarC family.

The protein is Putative nickel insertion protein of Synechococcus sp. (strain JA-2-3B'a(2-13)) (Cyanobacteria bacterium Yellowstone B-Prime).